Here is a 478-residue protein sequence, read N- to C-terminus: Glutamyl-tRNA(Gln) amidotransferase subunit A (478 aa).

Residues Lys68 and Ser143 each act as charge relay system in the active site. Catalysis depends on Ser167, which acts as the Acyl-ester intermediate.

The protein belongs to the amidase family. GatA subfamily. Heterotrimer of A, B and C subunits.

The catalysed reaction is L-glutamyl-tRNA(Gln) + L-glutamine + ATP + H2O = L-glutaminyl-tRNA(Gln) + L-glutamate + ADP + phosphate + H(+). Its function is as follows. Allows the formation of correctly charged Gln-tRNA(Gln) through the transamidation of misacylated Glu-tRNA(Gln) in organisms which lack glutaminyl-tRNA synthetase. The reaction takes place in the presence of glutamine and ATP through an activated gamma-phospho-Glu-tRNA(Gln). This Mycoplasma pneumoniae (strain ATCC 29342 / M129 / Subtype 1) (Mycoplasmoides pneumoniae) protein is Glutamyl-tRNA(Gln) amidotransferase subunit A (gatA).